Reading from the N-terminus, the 314-residue chain is uncharacterized protein (314 aa).

This sequence belongs to the carbohydrate kinase PfkB family.

This is an uncharacterized protein from Buchnera aphidicola subsp. Schizaphis graminum (strain Sg).